The following is a 129-amino-acid chain: Ribosome-binding factor A (129 aa).

This sequence belongs to the RbfA family. In terms of assembly, monomer. Binds 30S ribosomal subunits, but not 50S ribosomal subunits or 70S ribosomes.

It is found in the cytoplasm. Its function is as follows. One of several proteins that assist in the late maturation steps of the functional core of the 30S ribosomal subunit. Associates with free 30S ribosomal subunits (but not with 30S subunits that are part of 70S ribosomes or polysomes). Required for efficient processing of 16S rRNA. May interact with the 5'-terminal helix region of 16S rRNA. The protein is Ribosome-binding factor A of Desulfosudis oleivorans (strain DSM 6200 / JCM 39069 / Hxd3) (Desulfococcus oleovorans).